The chain runs to 35 residues: Cytochrome b6-f complex subunit 5 (35 aa).

Residues 5 to 25 (LLTGIVLGSIFITLLGLLAAA) form a helical membrane-spanning segment.

This sequence belongs to the PetG family. The 4 large subunits of the cytochrome b6-f complex are cytochrome b6, subunit IV (17 kDa polypeptide, PetD), cytochrome f and the Rieske protein, while the 4 small subunits are PetG, PetL, PetM and PetN. The complex functions as a dimer.

The protein localises to the plastid. It localises to the chloroplast thylakoid membrane. Functionally, component of the cytochrome b6-f complex, which mediates electron transfer between photosystem II (PSII) and photosystem I (PSI), cyclic electron flow around PSI, and state transitions. PetG is required for either the stability or assembly of the cytochrome b6-f complex. The chain is Cytochrome b6-f complex subunit 5 from Cyanidium caldarium (Red alga).